The primary structure comprises 539 residues: Sporozoite-associated protein (539 aa).

N-linked (GlcNAc...) asparagine glycosylation is found at asparagine 31, asparagine 90, asparagine 102, asparagine 149, and asparagine 167. Positions 126–153 are disordered; it reads LTQSPPPAAAPQSPSPRAILSPRNVSKT. The segment covering 192–215 has biased composition (low complexity); sequence VVAEKSNTPTTPKTTPNGKWTGKN. The tract at residues 192–231 is disordered; sequence VVAEKSNTPTTPKTTPNGKWTGKNANATIETSNTDHTPPS. A compositionally biased stretch (polar residues) spans 216–228; it reads ANATIETSNTDHT. N-linked (GlcNAc...) asparagine glycans are attached at residues asparagine 217, asparagine 271, and asparagine 288. Residues 303-355 are disordered; it reads TLISRAQDDKPGTKGGSDETSSSTAASNERQPMFPNDNDDDDIDQTYCPGVES. Over residues 320–332 the composition is skewed to polar residues; that stretch reads DETSSSTAASNER. N-linked (GlcNAc...) asparagine glycans are attached at residues asparagine 427 and asparagine 503.

In terms of tissue distribution, saliva (at protein level). Female salivary gland. Female midgut.

It is found in the secreted. Its function is as follows. Binds heparan sulfate proteoglycans present on the mammalian cell surface. Modulates host immune responses at the site of inoculation via decreasing the expression of TNF-alpha/TNF, IL-1beta/IL1B, IFN-gamma/IFNG, IL4, MMP9, TGF-beta and ICAM1. (Microbial infection) Interacts with the surface of Plasmodium berghei sporozoites. Promotes Plasmodium berghei transmission to the mouse host. Does not affect Plasmodium berghei sporozoite viability. Functionally, (Microbial infection) Interacts with the surface of Plasmodium falciparum sporozoites. The polypeptide is Sporozoite-associated protein (Anopheles gambiae (African malaria mosquito)).